A 351-amino-acid chain; its full sequence is uncharacterized protein (351 aa).

Mn(2+)-binding residues include D215, D226, H290, E319, and E333.

The protein belongs to the peptidase M24B family. Requires Mn(2+) as cofactor.

This is an uncharacterized protein from Staphylococcus epidermidis (strain ATCC 35984 / DSM 28319 / BCRC 17069 / CCUG 31568 / BM 3577 / RP62A).